The following is a 119-amino-acid chain: Large ribosomal subunit protein uL24 (119 aa).

This sequence belongs to the universal ribosomal protein uL24 family. Part of the 50S ribosomal subunit.

Functionally, one of two assembly initiator proteins, it binds directly to the 5'-end of the 23S rRNA, where it nucleates assembly of the 50S subunit. In terms of biological role, one of the proteins that surrounds the polypeptide exit tunnel on the outside of the subunit. This Leptospira interrogans serogroup Icterohaemorrhagiae serovar copenhageni (strain Fiocruz L1-130) protein is Large ribosomal subunit protein uL24.